We begin with the raw amino-acid sequence, 572 residues long: Asparagine--tRNA ligase, cytoplasmic 1 (572 aa).

The residue at position 2 (Ala2) is an N-acetylalanine. Residues 53-131 constitute a DNA-binding region (OB); sequence VRIGGWVKSG…QQIELNVVKV (79 aa). Residues 236–292 form the WHEP-TRS domain; sequence DVEAARLIVIERGNVVAELKAAKASKEAITAAVAELKIAKETFAHIDERSRLRPGLP.

Belongs to the class-II aminoacyl-tRNA synthetase family.

Its subcellular location is the cytoplasm. It is found in the cytosol. The enzyme catalyses tRNA(Asn) + L-asparagine + ATP = L-asparaginyl-tRNA(Asn) + AMP + diphosphate + H(+). The chain is Asparagine--tRNA ligase, cytoplasmic 1 from Arabidopsis thaliana (Mouse-ear cress).